The sequence spans 159 residues: Phosphopantetheine adenylyltransferase (159 aa).

Substrate is bound at residue Thr-10. Residues 10-11 (TF) and His-18 each bind ATP. Positions 42, 74, and 88 each coordinate substrate. ATP-binding positions include 89-91 (GLR), Glu-99, and 124-130 (WSFISSS).

It belongs to the bacterial CoaD family. In terms of assembly, homohexamer. The cofactor is Mg(2+).

It is found in the cytoplasm. It catalyses the reaction (R)-4'-phosphopantetheine + ATP + H(+) = 3'-dephospho-CoA + diphosphate. It participates in cofactor biosynthesis; coenzyme A biosynthesis; CoA from (R)-pantothenate: step 4/5. In terms of biological role, reversibly transfers an adenylyl group from ATP to 4'-phosphopantetheine, yielding dephospho-CoA (dPCoA) and pyrophosphate. In Enterobacter sp. (strain 638), this protein is Phosphopantetheine adenylyltransferase.